Reading from the N-terminus, the 574-residue chain is Penicillin-binding protein activator LpoA (574 aa).

Positions M1–G25 are cleaved as a signal peptide. A lipid anchor (N-palmitoyl cysteine) is attached at C26. Residue C26 is the site of S-diacylglycerol cysteine attachment.

This sequence belongs to the LpoA family. Interacts with PBP1a.

Its subcellular location is the cell outer membrane. In terms of biological role, regulator of peptidoglycan synthesis that is essential for the function of penicillin-binding protein 1A (PBP1a). This is Penicillin-binding protein activator LpoA from Mannheimia succiniciproducens (strain KCTC 0769BP / MBEL55E).